The sequence spans 352 residues: Sphingosine 1-phosphate receptor 2 (352 aa).

The Extracellular portion of the chain corresponds to 1–34 (MGGLYSEYLNPEKVLEHYNYTKETLDMQETTSRK). An N-linked (GlcNAc...) asparagine glycan is attached at N19. The chain crosses the membrane as a helical span at residues 35-59 (VASAFIIILCCAIVVENLLVLIAVA). At 60–66 (RNSKFHS) the chain is on the cytoplasmic side. A helical membrane pass occupies residues 67-95 (AMYLFLGNLAASDLLAGVAFVANTLLSGH). At 96–109 (VTLSLTPVQWFARE) the chain is on the extracellular side. A helical membrane pass occupies residues 110 to 128 (GSAFITLSASVFSLLAIAI). The Cytoplasmic portion of the chain corresponds to 129–147 (ERQVALAKVKLYGSDKSCR). Residues 148 to 173 (MLMLIGASWLISLILGGLPILGWNCL) form a helical membrane-spanning segment. Residues 174–189 (NQLEACSTVLPLYAKH) lie on the Extracellular side of the membrane. Residues 190-210 (YVLCVVTIFSVILLAIVALYV) form a helical membrane-spanning segment. Topologically, residues 211-233 (RIYFVVRSSHADVAGPQTLALLK) are cytoplasmic. The chain crosses the membrane as a helical span at residues 234–255 (TVTIVLGVFIICWLPAFSILLL). The Extracellular portion of the chain corresponds to 256–271 (DSTCPVRACPVLYKAH). A helical membrane pass occupies residues 272-292 (YFFAFATLNSLLNPVIYTWRS). The Cytoplasmic portion of the chain corresponds to 293 to 352 (RDLRREVLRPLQCWRRGKGVTGRRGGNPGHRLLPLRSSSSLERGMHMPTSPTFLEGNTVV). The S-palmitoyl cysteine moiety is linked to residue C305. The disordered stretch occupies residues 333-352 (LERGMHMPTSPTFLEGNTVV).

This sequence belongs to the G-protein coupled receptor 1 family. As to expression, most abundant in heart and lung; low, but clearly observed in kidney, liver and thymus; much lower but detectable in brain, testis, stomach and intestine. Not significantly detected in any of the sections of embryonic day (E) 14-18, except in embryonic brain.

The protein localises to the cell membrane. In terms of biological role, receptor for the lysosphingolipid sphingosine 1-phosphate (S1P). S1P is a bioactive lysophospholipid that elicits diverse physiological effects on most types of cells and tissues. Receptor for the chemokine-like protein FAM19A5. Mediates the inhibitory effect of FAM19A5 on vascular smooth muscle cell proliferation and migration. In lymphoid follicles, couples the binding of S1P to the activation of GNA13 and downstream inhibition of AKT activation leading to suppression of germinal center (GC) B cell growth and migration outside the GC niche. The chain is Sphingosine 1-phosphate receptor 2 (S1pr2) from Mus musculus (Mouse).